The primary structure comprises 328 residues: Sin3 histone deacetylase corepressor complex component SDS3 (328 aa).

Positions 1–22 (MSAAGLLAPAPAPAAAPAAPEY) are enriched in low complexity. Positions 1 to 69 (MSAAGLLAPA…HDEEDYVEMK (69 aa)) are disordered. An N-acetylserine modification is found at S2. A mediates interaction with USP17L2 region spans residues 2–170 (SAAGLLAPAP…IENEKLTMEL (169 aa)). Acidic residues-rich tracts occupy residues 23 to 37 (YPED…EDDE) and 45 to 54 (SDEDTEDASE). Residues S32 and S45 each carry the phosphoserine modification. T49 bears the Phosphothreonine mark. S53 is subject to Phosphoserine. Basic and acidic residues predominate over residues 56–69 (DLAKHDEEDYVEMK). Residues 66–171 (VEMKEQMYQD…ENEKLTMELT (106 aa)) are a coiled coil. Glycyl lysine isopeptide (Lys-Gly) (interchain with G-Cter in SUMO2) cross-links involve residues K69, K178, and K201. The tract at residues 188–226 (RPNDPVPIPDKRRKPAPAQLNYLLTDEQIMEDLRTLNKL) is sin3 interaction domain (SID). The tract at residues 226-252 (LKSPKRPASPSSPEHLPATPAESPAQR) is disordered. A phosphoserine mark is found at S228, S234, and S237. T244 is modified (phosphothreonine).

It belongs to the SDS3 family. As to quaternary structure, interacts with HCFC1. Homodimer. Component of the SIN3 histone deacetylase (HDAC) corepressor complex. Interacts with SIN3A. Interaction with SIN3B enhances the interaction between SIN3B and HDAC1 to form a complex. Component of a mSin3A corepressor complex that contains SIN3A, SAP130, SUDS3/SAP45, ARID4B/SAP180, HDAC1 and HDAC2. Interacts with USP17L2; the interaction is direct. Interacts with FOXK2. In terms of processing, polyubiquitinated. 'Lys-63'-polyubiquitinated SUDS3 positively regulates histone deacetylation. Regulated through deubiquitination by USP17L2/USP17 that cleaves 'Lys-63'-linked ubiquitin chains. Expressed in all newborn tissues tested, including brain, kidney and liver.

It is found in the nucleus. Regulatory protein which represses transcription and augments histone deacetylase activity of HDAC1. May have a potential role in tumor suppressor pathways through regulation of apoptosis. May function in the assembly and/or enzymatic activity of the mSin3A corepressor complex or in mediating interactions between the complex and other regulatory complexes. In Mus musculus (Mouse), this protein is Sin3 histone deacetylase corepressor complex component SDS3 (Suds3).